The following is a 122-amino-acid chain: MAPLQLLHPWGRRGAWASQHSLLSQEAMGPGEGAEPTPWGYLRAEHWGASPSGAPTLPFAPDECSLTPGSPPHPLNKQKHHPPHPSQTQKDLVPRSPQLEKSRIRLRRTLRNLGGGRGQRGQ.

The tract at residues 21 to 122 (SLLSQEAMGP…LGGGRGQRGQ (102 aa)) is disordered. Residues 113-122 (LGGGRGQRGQ) are compositionally biased toward gly residues.

The polypeptide is Putative TLX1 neighbor protein (TLX1NB) (Homo sapiens (Human)).